The primary structure comprises 172 residues: uncharacterized protein (172 aa).

A compositionally biased stretch (gly residues) spans Ala-147–Ser-159. The disordered stretch occupies residues Ala-147 to Leu-172.

This is an uncharacterized protein from Homo sapiens (Human).